A 571-amino-acid polypeptide reads, in one-letter code: CDT1-like protein a, chloroplastic (571 aa).

Residues 1-79 (MSTPGSSRSI…GSRRRSEDPV (79 aa)) constitute a chloroplast transit peptide. Disordered regions lie at residues 1 to 110 (MSTP…EKEK) and 288 to 315 (TTSSLAKPTSSQINIAPTPTKPTSTPAK). The segment covering 22–38 (SPSSKSQTGNPNPSSVA) has biased composition (polar residues). Residues 81 to 96 (SSAKSRLFFDSSSSSP) are compositionally biased toward low complexity. Polar residues predominate over residues 288–302 (TTSSLAKPTSSQINI). Over residues 303–315 (APTPTKPTSTPAK) the composition is skewed to low complexity.

This sequence belongs to the Cdt1 family. Binds to ARC6. Phosphorylated by cyclin D- and cyclin A-containing CDKA-1, and thus targeted to proteasome-mediated proteolysis. In terms of tissue distribution, expressed in proliferating (e.g. shoot and root apical meristems, organ primordia) and endoreplicating cells (e.g. guard cells and stomatal lineage, developing trichomes).

It is found in the plastid. The protein localises to the chloroplast. In terms of biological role, member of the pre-replication complex. Component of the plastid division machinery. Promotes polyloidization and regulates endoreduplication. Involved in the coordination of cell and plastid division. In Arabidopsis thaliana (Mouse-ear cress), this protein is CDT1-like protein a, chloroplastic (CDT1A).